The following is a 54-amino-acid chain: Large ribosomal subunit protein bL33 (54 aa).

Belongs to the bacterial ribosomal protein bL33 family.

This Legionella pneumophila (strain Lens) protein is Large ribosomal subunit protein bL33.